Reading from the N-terminus, the 190-residue chain is NADH-quinone oxidoreductase subunit B (190 aa).

[4Fe-4S] cluster-binding residues include Cys-69, Cys-70, Cys-134, and Cys-164.

The protein belongs to the complex I 20 kDa subunit family. As to quaternary structure, NDH-1 is composed of 14 different subunits. Subunits NuoB, C, D, E, F, and G constitute the peripheral sector of the complex. Requires [4Fe-4S] cluster as cofactor.

The protein resides in the cell inner membrane. The catalysed reaction is a quinone + NADH + 5 H(+)(in) = a quinol + NAD(+) + 4 H(+)(out). Functionally, NDH-1 shuttles electrons from NADH, via FMN and iron-sulfur (Fe-S) centers, to quinones in the respiratory chain. Couples the redox reaction to proton translocation (for every two electrons transferred, four hydrogen ions are translocated across the cytoplasmic membrane), and thus conserves the redox energy in a proton gradient. The sequence is that of NADH-quinone oxidoreductase subunit B from Chelativorans sp. (strain BNC1).